A 343-amino-acid chain; its full sequence is Ribosomal RNA small subunit methyltransferase C (343 aa).

The protein belongs to the methyltransferase superfamily. RsmC family. In terms of assembly, monomer.

Its subcellular location is the cytoplasm. The catalysed reaction is guanosine(1207) in 16S rRNA + S-adenosyl-L-methionine = N(2)-methylguanosine(1207) in 16S rRNA + S-adenosyl-L-homocysteine + H(+). Specifically methylates the guanine in position 1207 of 16S rRNA in the 30S particle. The protein is Ribosomal RNA small subunit methyltransferase C of Escherichia coli O17:K52:H18 (strain UMN026 / ExPEC).